The primary structure comprises 315 residues: Protein TIFY 4B (315 aa).

Residues 113–145 form a disordered region; sequence CHRRDSPRSAEFSGSSGQFVADKDSHKTVSVSP. A Tify domain is found at 151–186; the sequence is TNAVVGQMTIFYSGKVNVYDGVPPEKARSIMHFAAN. The Jas motif lies at 233-260; sequence QANRKVSLQRYLEKRKDRRFSKTKKAPG. The short motif at 235–242 is the Nuclear localization signal element; sequence NRKVSLQR. Residues 248 to 257 are compositionally biased toward basic residues; that stretch reads KDRRFSKTKK. The disordered stretch occupies residues 248-315; that stretch reads KDRRFSKTKK…LNSDLNSEDN (68 aa). Polar residues predominate over residues 293–315; it reads PENQTKSPNISVDLNSDLNSEDN.

This sequence belongs to the TIFY/JAZ family. Interacts with AFPH2/NINJA.

It is found in the nucleus. In terms of biological role, regulates the arrest of dispersed meristematic cells during lamina development. This chain is Protein TIFY 4B (TIFY4B), found in Arabidopsis thaliana (Mouse-ear cress).